The chain runs to 528 residues: PC4 and SFRS1-interacting protein (528 aa).

Residues 7-64 enclose the PWWP domain; the sequence is PGDLIFAKMKGYPHWPARVDEVPDGAVKPPTNKLPIFFFGTHETAFLGPKDIFPYSEN. Lys75 participates in a covalent cross-link: Glycyl lysine isopeptide (Lys-Gly) (interchain with G-Cter in SUMO2). The segment at 86-347 is disordered; the sequence is NNPKVKFSSQ…VEKKRETSMD (262 aa). Residues 92–106 show a composition bias toward polar residues; the sequence is FSSQQVSTKQSNASS. Phosphoserine is present on residues Ser102, Ser105, and Ser106. The segment covering 113 to 135 has biased composition (basic and acidic residues); it reads KETSVSKEDTDQEEKASNEDVTK. Residues Thr115 and Thr122 each carry the phosphothreonine modification. Ser129 carries the post-translational modification Phosphoserine. Thr141 is modified (phosphothreonine). Residues 144–153 show a composition bias toward basic residues; that stretch reads AARRGRKRKA. Positions 146-156 match the Nuclear localization signal motif; the sequence is RRGRKRKAEKQ. A phosphoserine mark is found at Ser176 and Ser205. Residues 212–260 show a composition bias toward basic and acidic residues; that stretch reads DEDKSKKKGPEEKPPKKQLKKEEEGQKEEEKPRKEPDKKEGKKEVESKR. Ser270 is subject to Phosphoserine. Thr271 bears the Phosphothreonine mark. Phosphoserine is present on residues Ser272 and Ser274. Positions 285–300 are enriched in basic residues; the sequence is KRKGGRHFQAAHRRNM. The segment covering 303 to 347 has biased composition (basic and acidic residues); it reads GQHEKEAADRKRKQEEQMETEQQTKDEGKKPEVKKVEKKRETSMD. Coiled-coil stretches lie at residues 304-332 and 369-393; these read QHEK…EGKK and NRCI…KHTE. Residues 338 to 415 form an integrase-binding domain (IBD) region; that stretch reads VEKKRETSMD…VSQVIMEKST (78 aa). The residue at position 432 (Ser432) is a Phosphoserine. Thr435 carries the phosphothreonine modification. Ser441 carries the phosphoserine modification. Basic and acidic residues predominate over residues 444–471; it reads EQRQHEEANKTKDQGKKGPNKKLEKEQT. Residues 444–528 form a disordered region; sequence EQRQHEEANK…VSLKESTLDN (85 aa). Positions 472 to 492 are enriched in polar residues; it reads GTKSLNGGSDAQESNHPQHNG. The segment covering 496-528 has biased composition (basic and acidic residues); that stretch reads EESKDSREAGSKTKTPGEEREAEVSLKESTLDN. Arg515 is modified (citrulline). The residue at position 520 (Ser520) is a Phosphoserine. Position 525 is a phosphothreonine (Thr525).

Belongs to the HDGF family. As to quaternary structure, monomer. Interacts with IFRD1/PC4. Interacts (via IBD domain) with POGZ (via IBM motif) and CDCA7L (via IBM motifs). Interacts (via IBD domain) with KMT2A (via IBM motifs) with a moderate affinity whereas interacts with the KMT2A-MEN1 complex with a greater affinity; MEN1 enhances interaction of KMT2A with PSIP1. Interacts (via IBD domain) with IWS1 (via IBM motif), MED1 (via IBM motif) and DBF4 (via IBM motifs). Citrullinated by PADI4.

It is found in the nucleus. Functionally, transcriptional coactivator involved in neuroepithelial stem cell differentiation and neurogenesis. Involved in particular in lens epithelial cell gene regulation and stress responses. May play an important role in lens epithelial to fiber cell terminal differentiation. May play a protective role during stress-induced apoptosis. This is PC4 and SFRS1-interacting protein (Psip1) from Rattus norvegicus (Rat).